Reading from the N-terminus, the 469-residue chain is MNDFGIKNMDQVAPVANSYRGTLKRQPAFDTFDGSLFAVFPSLNEEQTLQEVPTGLDSISHDSANCELPLLTPCSKAVMSQALKATFSGFKKEQRRLGIPKNPWLWSEQQVCQWLLWATNEFSLVNVNLQRFGMNGQMLCNLGKERFLELAPDFVGDILWEHLEQMIKENQEKTEDQYEENSHLTSVPHWINSNTLGFGTEQAPYGMQTQNYPKGGLLDSMCPASTPSVLSSEQEFQMFPKSRLSSVSVTYCSVSQDFPGSNLNLLTNNSGTPKDHDSPENGADSFESSDSLLQSWNSQSSLLDVQRVPSFESFEDDCSQSLCLNKPTMSFKDYIQERSDPVEQGKPVIPAAVLAGFTGSGPIQLWQFLLELLSDKSCQSFISWTGDGWEFKLADPDEVARRWGKRKNKPKMNYEKLSRGLRYYYDKNIIHKTSGKRYVYRFVCDLQNLLGFTPEELHAILGVQPDTED.

In terms of domain architecture, PNT spans 85–170 (ATFSGFKKEQ…EHLEQMIKEN (86 aa)). S220 and S225 each carry phosphoserine. The tract at residues 264–289 (NLLTNNSGTPKDHDSPENGADSFESS) is disordered. Phosphoserine occurs at positions 295, 298, and 301. A DNA-binding region (ETS) is located at residues 363–443 (IQLWQFLLEL…SGKRYVYRFV (81 aa)).

This sequence belongs to the ETS family. In terms of processing, phosphorylation by CDK10 at Ser-220 and Ser-225 creates a phosphodegron that targets ETS2 for proteasomal degradation.

The protein resides in the nucleus. Its function is as follows. Transcription factor activating transcription. Binds specifically the DNA GGAA/T core motif (Ets-binding site or EBS) in gene promoters and stimulates transcription. This chain is Protein C-ets-2 (ETS2), found in Homo sapiens (Human).